The sequence spans 569 residues: Pyrophosphate--fructose 6-phosphate 1-phosphotransferase subunit beta 2 (569 aa).

Residue glycine 107 coordinates diphosphate. Aspartate 201 is a binding site for Mg(2+). Substrate contacts are provided by residues 229-231, 268-269, 276-278, glutamate 337, and 442-445; these read TID, KY, MGR, and YEGR. The active-site Proton acceptor is aspartate 231.

It belongs to the phosphofructokinase type A (PFKA) family. PPi-dependent PFK group II subfamily. Clade 'Long' sub-subfamily. Tetramer of two alpha (regulatory) and two beta (catalytic) chains. It depends on Mg(2+) as a cofactor.

The protein resides in the cytoplasm. It catalyses the reaction beta-D-fructose 6-phosphate + diphosphate = beta-D-fructose 1,6-bisphosphate + phosphate + H(+). The protein operates within carbohydrate degradation; glycolysis; D-glyceraldehyde 3-phosphate and glycerone phosphate from D-glucose: step 3/4. With respect to regulation, allosterically activated by fructose 2,6-bisphosphate. Its function is as follows. Catalytic subunit of pyrophosphate--fructose 6-phosphate 1-phosphotransferase. Catalyzes the phosphorylation of D-fructose 6-phosphate, the first committing step of glycolysis. Uses inorganic phosphate (PPi) as phosphoryl donor instead of ATP like common ATP-dependent phosphofructokinases (ATP-PFKs), which renders the reaction reversible, and can thus function both in glycolysis and gluconeogenesis. This is Pyrophosphate--fructose 6-phosphate 1-phosphotransferase subunit beta 2 from Arabidopsis thaliana (Mouse-ear cress).